Here is a 482-residue protein sequence, read N- to C-terminus: C3a anaphylatoxin chemotactic receptor (482 aa).

Residues 1–23 lie on the Extracellular side of the membrane; that stretch reads MASFSAETNSTDLLSQPWNEPPV. The N-linked (GlcNAc...) asparagine glycan is linked to N9. The chain crosses the membrane as a helical span at residues 24–46; the sequence is ILSMVILSLTFLLGLPGNGLVLW. The Cytoplasmic segment spans residues 47–57; sequence VAGLKMQRTVN. Residues 58–80 form a helical membrane-spanning segment; sequence TVWFLHLTLADLLCCLSLPFSLA. The Extracellular portion of the chain corresponds to 81–96; that stretch reads HLALQGQWPYGRFLCE. Cysteines 95 and 172 form a disulfide. Residues 97 to 118 traverse the membrane as a helical segment; it reads LIPSIIVLNMFASVFLLTAISL. At 119-139 the chain is on the cytoplasmic side; it reads DRCLVVFKPIWCQNHRNVGTA. Residues 140–160 traverse the membrane as a helical segment; that stretch reads CSICGCIWVVAFVMCIPVFVY. The Extracellular portion of the chain corresponds to 161 to 340; sequence REIFTADNHN…TPLVAITITR (180 aa). Y174 and Y184 each carry sulfotyrosine. Residue N194 is glycosylated (N-linked (GlcNAc...) asparagine). The residue at position 318 (Y318) is a Sulfotyrosine. A helical membrane pass occupies residues 341–360; that stretch reads LVVGFLLPSVIMIACYSFIV. Residues 361–377 lie on the Cytoplasmic side of the membrane; the sequence is FRMQRGRFAKSQSKTFR. A helical transmembrane segment spans residues 378-400; it reads VAVVVVAVFLVCWTPYHIFGVLS. The Extracellular segment spans residues 401-417; the sequence is LLIDPESPLGKTLMSWD. The chain crosses the membrane as a helical span at residues 418-438; that stretch reads HVSIALASANSCFNPFLYALL. Residues 439-482 lie on the Cytoplasmic side of the membrane; sequence GKDFRKKARQSIQGILEAAFSEELTRSTHCNSNNVFSERNSTTV. The residue at position 459 (S459) is a Phosphoserine. Residue T463 is modified to Phosphothreonine.

The protein belongs to the G-protein coupled receptor 1 family. In terms of assembly, interacts with VGF-derived peptide TLQP-21. Among the sulfation sites Tyr-174 is essential for binding of C3a anaphylatoxin.

Its subcellular location is the cell membrane. Receptor for the chemotactic and inflammatory peptide anaphylatoxin C3a. This receptor stimulates chemotaxis, granule enzyme release and superoxide anion production. In Pongo abelii (Sumatran orangutan), this protein is C3a anaphylatoxin chemotactic receptor (C3AR1).